We begin with the raw amino-acid sequence, 337 residues long: Anthranilate phosphoribosyltransferase (337 aa).

5-phospho-alpha-D-ribose 1-diphosphate-binding positions include glycine 81, 84-85 (GD), serine 89, 91-94 (NVST), 109-117 (KHGNRAMSS), and alanine 121. Residue glycine 81 participates in anthranilate binding. Serine 93 serves as a coordination point for Mg(2+). Asparagine 112 is a binding site for anthranilate. Arginine 167 is an anthranilate binding site. Positions 226 and 227 each coordinate Mg(2+).

This sequence belongs to the anthranilate phosphoribosyltransferase family. Homodimer. Requires Mg(2+) as cofactor.

The catalysed reaction is N-(5-phospho-beta-D-ribosyl)anthranilate + diphosphate = 5-phospho-alpha-D-ribose 1-diphosphate + anthranilate. The protein operates within amino-acid biosynthesis; L-tryptophan biosynthesis; L-tryptophan from chorismate: step 2/5. In terms of biological role, catalyzes the transfer of the phosphoribosyl group of 5-phosphorylribose-1-pyrophosphate (PRPP) to anthranilate to yield N-(5'-phosphoribosyl)-anthranilate (PRA). This is Anthranilate phosphoribosyltransferase from Afipia carboxidovorans (strain ATCC 49405 / DSM 1227 / KCTC 32145 / OM5) (Oligotropha carboxidovorans).